The following is a 368-amino-acid chain: Putative phospho-2-dehydro-3-deoxyheptonate aldolase (368 aa).

Belongs to the class-I DAHP synthase family.

It carries out the reaction D-erythrose 4-phosphate + phosphoenolpyruvate + H2O = 7-phospho-2-dehydro-3-deoxy-D-arabino-heptonate + phosphate. It participates in metabolic intermediate biosynthesis; chorismate biosynthesis; chorismate from D-erythrose 4-phosphate and phosphoenolpyruvate: step 1/7. Stereospecific condensation of phosphoenolpyruvate (PEP) and D-erythrose-4-phosphate (E4P) giving rise to 3-deoxy-D-arabino-heptulosonate-7-phosphate (DAHP). The protein is Putative phospho-2-dehydro-3-deoxyheptonate aldolase of Schizosaccharomyces pombe (strain 972 / ATCC 24843) (Fission yeast).